The primary structure comprises 124 residues: Autophagy-related protein 8 (124 aa).

Gly116 carries the Phosphatidylethanolamine amidated glycine lipid modification. The propeptide at 117-124 (GAGPLLEK) is removed in mature form.

It belongs to the ATG8 family. As to quaternary structure, conjugation to phosphatidylethanolamine (PE) leads to homodimerization. Interacts with ATG1, ATG3, ATG4, ATG7 and ATG12. Post-translationally, the C-terminal 8 residues of ATG8 are removed by ATG4 to expose Gly-116 at the C-terminus. This Gly-116 forms then a thioester bond with the 'Cys-550' of ATG7 (E1-like activating enzyme) before being transferred to the 'Cys-244' of ATG3 (the specific E2 conjugating enzyme), in order to be finally amidated with phosphatidylethanolamine. This lipid modification anchors ATG8 to membranes and can be reversed by ATG4, releasing soluble ATG8.

It is found in the cytoplasmic vesicle. It localises to the cvt vesicle membrane. The protein localises to the autophagosome membrane. Its subcellular location is the vacuole membrane. Functionally, ubiquitin-like modifier involved in cytoplasm to vacuole transport (Cvt) vesicles and autophagosome formation. With ATG4, mediates the delivery of the vesicles and autophagosomes to the vacuole via the microtubule cytoskeleton. Required for selective autophagic degradation of the nucleus (nucleophagy) as well as for mitophagy which contributes to regulate mitochondrial quantity and quality by eliminating the mitochondria to a basal level to fulfill cellular energy requirements and preventing excess ROS production. Also participates in membrane fusion events that take place in the early secretory pathway. Also involved in endoplasmic reticulum-specific autophagic process and is essential for the survival of cells subjected to severe ER stress. The ATG8-PE conjugate mediates tethering between adjacent membranes and stimulates membrane hemifusion, leading to expansion of the autophagosomal membrane during autophagy. Moreover not only conjugation, but also subsequent ATG8-PE deconjugation is an important step required to facilitate multiple events during macroautophagy, and especially for efficient autophagosome biogenesis, the assembly of ATG9-containing tubulovesicular clusters into phagophores/autophagosomes, and for the disassembly of PAS-associated ATG components. This chain is Autophagy-related protein 8, found in Kluyveromyces marxianus (strain DMKU3-1042 / BCC 29191 / NBRC 104275) (Yeast).